A 133-amino-acid polypeptide reads, in one-letter code: Ubiquitin-like FUBI-ribosomal protein eS30 fusion protein (133 aa).

The 74-residue stretch at 1–74 (MQLFVRAQEL…LEVAGRMLGG (74 aa)) folds into the Ubiquitin-like domain. The interval 84–110 (GKVRGQTPKVAKQEKKKKKTGRAKRRM) is disordered. A compositionally biased stretch (basic residues) spans 97–110 (EKKKKKTGRAKRRM). K125 is subject to N6-succinyllysine.

In the N-terminal section; belongs to the ubiquitin family. This sequence in the C-terminal section; belongs to the eukaryotic ribosomal protein eS30 family. Component of the 40S subunit of the ribosome. Post-translationally, FUBI is cleaved from ribosomal protein S30 by the deubiquitinase USP36 before the assembly of ribosomal protein S30 into pre-40S ribosomal particles. FUBI removal from ribosomal protein S30 is a crucial event for the final maturation of pre-40S particles.

It localises to the cytoplasm. It is found in the nucleus. In terms of biological role, may have pro-apoptotic activity. Functionally, component of the 40S subunit of the ribosome. Contributes to the assembly and function of 40S ribosomal subunits. The protein is Ubiquitin-like FUBI-ribosomal protein eS30 fusion protein of Homo sapiens (Human).